The chain runs to 552 residues: Macrophage colony-stimulating factor 1 (552 aa).

The signal sequence occupies residues Met-1–Ala-32. The Extracellular portion of the chain corresponds to Lys-33–Glu-492. 3 disulfide bridges follow: Cys-39–Cys-122, Cys-80–Cys-171, and Cys-134–Cys-178. N-linked (GlcNAc...) asparagine glycans are attached at residues Asn-107, Asn-154, and Asn-172. Low complexity predominate over residues Thr-197–Pro-207. The tract at residues Thr-197 to Ile-293 is disordered. Polar residues predominate over residues Pro-254–Pro-267. The segment covering Asn-268–Gln-278 has biased composition (basic and acidic residues). Residue Ser-308 is glycosylated (O-linked (Xyl...) (chondroitin sulfate) serine). Disordered regions lie at residues Lys-321 to Asn-412 and Gly-439 to Val-465. Composition is skewed to basic and acidic residues over residues Ser-350–Leu-364, Glu-382–Glu-396, and Gly-439–Ala-450. A glycan (O-linked (GalNAc...) threonine) is linked at Thr-360. The chain crosses the membrane as a helical span at residues Ser-493–Tyr-515. Topologically, residues Lys-516 to Val-552 are cytoplasmic. Residues Pro-525–Val-552 are disordered. Over residues Asp-543–Val-552 the composition is skewed to basic and acidic residues.

In terms of assembly, homodimer or heterodimer; disulfide-linked. Likely to exist in multiple forms: homodimer consisting of 2 identical 150-200 kDa proteoglycan subunits, heterodimer consisting of a 150-200 kDa proteoglycan subunit and a truncated 43 kDa subunit, and homodimer consisting of 2 identical 43 kDa subunits. Interacts with CSF1R. N-glycosylated. In terms of processing, O-glycosylated; contains chondroitin sulfate.

It is found in the cell membrane. The protein localises to the secreted. It localises to the extracellular space. Its function is as follows. Cytokine that plays an essential role in the regulation of survival, proliferation and differentiation of hematopoietic precursor cells, especially mononuclear phagocytes, such as macrophages and monocytes. Promotes the release of pro-inflammatory chemokines, and thereby plays an important role in innate immunity and in inflammatory processes. Plays an important role in the regulation of osteoclast proliferation and differentiation, the regulation of bone resorption, and is required for normal bone development. Required for normal male and female fertility. Promotes reorganization of the actin cytoskeleton, regulates formation of membrane ruffles, cell adhesion and cell migration. Plays a role in lipoprotein clearance. This Mus musculus (Mouse) protein is Macrophage colony-stimulating factor 1 (Csf1).